Reading from the N-terminus, the 332-residue chain is Protein phosphatase PTC7 homolog fig (332 aa).

In terms of domain architecture, PPM-type phosphatase spans 70-325 (KPCSPRERAN…DDITLILASV (256 aa)). Residues Asp102, Gly103, and Asp247 each contribute to the Mn(2+) site.

The protein belongs to the PP2C family. Mg(2+) serves as cofactor. Requires Mn(2+) as cofactor.

It catalyses the reaction O-phospho-L-seryl-[protein] + H2O = L-seryl-[protein] + phosphate. The enzyme catalyses O-phospho-L-threonyl-[protein] + H2O = L-threonyl-[protein] + phosphate. This is Protein phosphatase PTC7 homolog fig from Drosophila ananassae (Fruit fly).